The following is a 943-amino-acid chain: UvrABC system protein A (943 aa).

Residue 31–38 coordinates ATP; that stretch reads GLSGSGKS. Residues 253–280 form a C4-type zinc finger; the sequence is CPHCGYSVPELEPRLFSFNNPAGACPTC. ABC transporter domains lie at 310–587 and 607–937; these read WDRR…PNSI and LDKK…RFLK. 640–647 is a binding site for ATP; the sequence is GVSGSGKS. The segment at 740 to 766 adopts a C4-type zinc-finger fold; that stretch reads CEACQGDGVLKVEMHFLPDVYVPCDQC.

Belongs to the ABC transporter superfamily. UvrA family. Forms a heterotetramer with UvrB during the search for lesions.

The protein resides in the cytoplasm. Functionally, the UvrABC repair system catalyzes the recognition and processing of DNA lesions. UvrA is an ATPase and a DNA-binding protein. A damage recognition complex composed of 2 UvrA and 2 UvrB subunits scans DNA for abnormalities. When the presence of a lesion has been verified by UvrB, the UvrA molecules dissociate. The sequence is that of UvrABC system protein A from Haemophilus influenzae (strain ATCC 51907 / DSM 11121 / KW20 / Rd).